A 496-amino-acid polypeptide reads, in one-letter code: Glutamyl-tRNA(Gln) amidotransferase subunit A (496 aa).

Catalysis depends on charge relay system residues K75 and S150. Residue S174 is the Acyl-ester intermediate of the active site.

The protein belongs to the amidase family. GatA subfamily. As to quaternary structure, heterotrimer of A, B and C subunits.

It catalyses the reaction L-glutamyl-tRNA(Gln) + L-glutamine + ATP + H2O = L-glutaminyl-tRNA(Gln) + L-glutamate + ADP + phosphate + H(+). In terms of biological role, allows the formation of correctly charged Gln-tRNA(Gln) through the transamidation of misacylated Glu-tRNA(Gln) in organisms which lack glutaminyl-tRNA synthetase. The reaction takes place in the presence of glutamine and ATP through an activated gamma-phospho-Glu-tRNA(Gln). This is Glutamyl-tRNA(Gln) amidotransferase subunit A from Burkholderia ambifaria (strain ATCC BAA-244 / DSM 16087 / CCUG 44356 / LMG 19182 / AMMD) (Burkholderia cepacia (strain AMMD)).